The sequence spans 557 residues: MGNTCRGSIGGKTFQGYTQPEDSSCSTNHNPSSGNSYSSSDNFSPTSNAQQNSNHKKEHSLSLVSPRKASMNRSGSNQAYYVMGHMTPNIRDLYTLGRKLGQGQFGTTYLCTENSTGAEYACKSISKRKLISKEDVEDVRREIQIMHHLSGHRNIVTIKGAYEDPLYVHIVMEICSGGELFDRIIQRGHYSERKAAELTKIIVGVVEACHSLGVMHRDLKPENFLLVNKDNDFSLKAIDFGLSVFFKPGQIFTDVVGSPYYVAPEVLLKHYGPEADVWTAGVILYILLSGVPPFWAETQQGIFDAVLKGHIDFDSDPWPLISESAKDLIRKMLCMQPSERLTAHEVLCHPWICENGVAPDRALDPAVLSRLKQFSAMNKLKKMALRVIAESLSEEEIAGLREMFKAMDTDSSGAITFDELKAGLRKYGSTLKDTEIRELMDAADVDNSGTIDYGEFIAATVHLNKLEREEHLMAAFQYFDKDGSGYITVDEVQQACIEHNMTDVYFEDIIREVDQDNDGRIDYGEFVAMMQKGNPCIGRRTMRNSLNLSMRDAPGAQ.

The segment at 1 to 72 (MGNTCRGSIG…LVSPRKASMN (72 aa)) is disordered. Glycine 2 carries N-myristoyl glycine lipidation. Over residues 15-27 (QGYTQPEDSSCST) the composition is skewed to polar residues. Residues 28-48 (NHNPSSGNSYSSSDNFSPTSN) are compositionally biased toward low complexity. The Protein kinase domain maps to 94-352 (YTLGRKLGQG…AHEVLCHPWI (259 aa)). Residues 100–108 (LGQGQFGTT) and lysine 123 contribute to the ATP site. Residue aspartate 218 is the Proton acceptor of the active site. The tract at residues 358–388 (APDRALDPAVLSRLKQFSAMNKLKKMALRVI) is autoinhibitory domain. EF-hand domains lie at 395–430 (EEIA…YGST), 431–466 (LKDT…LNKL), 467–502 (EREE…HNMT), and 506–536 (FEDI…GNPC). Ca(2+) contacts are provided by aspartate 408, aspartate 410, serine 412, glutamate 419, aspartate 444, aspartate 446, serine 448, threonine 450, glutamate 455, aspartate 480, aspartate 482, serine 484, tyrosine 486, glutamate 491, aspartate 514, aspartate 516, aspartate 518, arginine 520, and glutamate 525.

This sequence belongs to the protein kinase superfamily. Ser/Thr protein kinase family. CDPK subfamily.

It localises to the membrane. It carries out the reaction L-seryl-[protein] + ATP = O-phospho-L-seryl-[protein] + ADP + H(+). It catalyses the reaction L-threonyl-[protein] + ATP = O-phospho-L-threonyl-[protein] + ADP + H(+). Its activity is regulated as follows. Activated by calcium. Autophosphorylation may play an important role in the regulation of the kinase activity. Functionally, regulates the production of reactive oxygen species (ROS) by NADPH oxidase. The protein is Calcium-dependent protein kinase 4 (CPK4) of Solanum tuberosum (Potato).